The following is an 882-amino-acid chain: Valine--tRNA ligase (882 aa).

A 'HIGH' region motif is present at residues 45–55; sequence PNVTGKLHLGH. Residues 519 to 523 carry the 'KMSKS' region motif; the sequence is KMSKS. K522 is a binding site for ATP. Residues 808–882 adopt a coiled-coil conformation; sequence LADLLNVEEE…RIAEMKKIKS (75 aa).

This sequence belongs to the class-I aminoacyl-tRNA synthetase family. ValS type 1 subfamily. Monomer.

The protein localises to the cytoplasm. It carries out the reaction tRNA(Val) + L-valine + ATP = L-valyl-tRNA(Val) + AMP + diphosphate. Functionally, catalyzes the attachment of valine to tRNA(Val). As ValRS can inadvertently accommodate and process structurally similar amino acids such as threonine, to avoid such errors, it has a 'posttransfer' editing activity that hydrolyzes mischarged Thr-tRNA(Val) in a tRNA-dependent manner. The polypeptide is Valine--tRNA ligase (Streptococcus pyogenes serotype M28 (strain MGAS6180)).